Here is a 184-residue protein sequence, read N- to C-terminus: Large ribosomal subunit protein uL6 (184 aa).

This sequence belongs to the universal ribosomal protein uL6 family. In terms of assembly, part of the 50S ribosomal subunit.

Functionally, this protein binds to the 23S rRNA, and is important in its secondary structure. It is located near the subunit interface in the base of the L7/L12 stalk, and near the tRNA binding site of the peptidyltransferase center. The sequence is that of Large ribosomal subunit protein uL6 from Thermococcus onnurineus (strain NA1).